The chain runs to 152 residues: Large ribosomal subunit protein uL13 (152 aa).

Residues 130–152 form a disordered region; it reads HPHEAQSPEVLDLASKNPKNTRS.

The protein belongs to the universal ribosomal protein uL13 family. In terms of assembly, part of the 50S ribosomal subunit.

Its function is as follows. This protein is one of the early assembly proteins of the 50S ribosomal subunit, although it is not seen to bind rRNA by itself. It is important during the early stages of 50S assembly. This is Large ribosomal subunit protein uL13 from Dinoroseobacter shibae (strain DSM 16493 / NCIMB 14021 / DFL 12).